A 519-amino-acid polypeptide reads, in one-letter code: MPSTQTLRLIPRKLTLAQLRQVYDSPVQVSLDDSAYKDIDASHDCVKEIIARDKSAYGINTGFGLLAKTRISDDQLGLLQYNLIVSHSVGTGERLEDGVVRLIMVMKVASLAQGFSGVRRKVIDGLIGLINHDIIPHIPAKGSVGASGDLAPLSHMTLTLLGQGTCYINGQEMSAKDALAQAGLEPVTLAAKEGLALINGTQVSTALTLRGYFLARDLVSTATVVGALSVDAARGSDSPFDARIHELRGHHGQIQVAKAHRRLIAGSEIRASHTENDDRVQDPYCLRCQPQVVGACLDIINQAGHTLLIEANAVTDNPLIFRDEDGPVAISGGNFHAEPVAFAADTLALAIAEIGSMSERRVALLIDATLNGGLPPFLVDNPGVNSGFMIAHVTAAALASENKSLAHPASVDSIPTSANQEDHVSMATFAGRRLYDMAQNTATIVGIELLAAGQGIDFHKGLQTSELLTKAHALLREKVSFYDKDRYLAPDIEAAKQLVLSAALNEHWSELRADWFLQD.

A cross-link (5-imidazolinone (Ala-Gly)) is located at residues 146 to 148; sequence ASG. A 2,3-didehydroalanine (Ser) modification is found at serine 147.

The protein belongs to the PAL/histidase family. Post-translationally, contains an active site 4-methylidene-imidazol-5-one (MIO), which is formed autocatalytically by cyclization and dehydration of residues Ala-Ser-Gly.

Its subcellular location is the cytoplasm. The enzyme catalyses L-histidine = trans-urocanate + NH4(+). It functions in the pathway amino-acid degradation; L-histidine degradation into L-glutamate; N-formimidoyl-L-glutamate from L-histidine: step 1/3. The chain is Histidine ammonia-lyase from Psychrobacter sp. (strain PRwf-1).